A 785-amino-acid polypeptide reads, in one-letter code: Endonuclease MutS2 (785 aa).

334 to 341 (GPNTGGKT) contributes to the ATP binding site. A Smr domain is found at 710–785 (LDLRGYNVED…GVGATIAELK (76 aa)).

Belongs to the DNA mismatch repair MutS family. MutS2 subfamily. As to quaternary structure, homodimer. Binds to stalled ribosomes, contacting rRNA.

Its function is as follows. Endonuclease that is involved in the suppression of homologous recombination and thus may have a key role in the control of bacterial genetic diversity. Acts as a ribosome collision sensor, splitting the ribosome into its 2 subunits. Detects stalled/collided 70S ribosomes which it binds and splits by an ATP-hydrolysis driven conformational change. Acts upstream of the ribosome quality control system (RQC), a ribosome-associated complex that mediates the extraction of incompletely synthesized nascent chains from stalled ribosomes and their subsequent degradation. Probably generates substrates for RQC. The chain is Endonuclease MutS2 from Brevibacillus brevis (strain 47 / JCM 6285 / NBRC 100599).